Consider the following 193-residue polypeptide: Oligoribonuclease (193 aa).

The Exonuclease domain occupies 8–171 (LVWLDLEMTG…EDIRESVAEL (164 aa)). Residue Y129 is part of the active site.

The protein belongs to the oligoribonuclease family.

It localises to the cytoplasm. Functionally, 3'-to-5' exoribonuclease specific for small oligoribonucleotides. In Alkalilimnicola ehrlichii (strain ATCC BAA-1101 / DSM 17681 / MLHE-1), this protein is Oligoribonuclease.